A 198-amino-acid polypeptide reads, in one-letter code: ATP-dependent Clp protease proteolytic subunit (198 aa).

Ser-98 acts as the Nucleophile in catalysis. His-123 is an active-site residue.

It belongs to the peptidase S14 family. As to quaternary structure, fourteen ClpP subunits assemble into 2 heptameric rings which stack back to back to give a disk-like structure with a central cavity, resembling the structure of eukaryotic proteasomes.

It localises to the cytoplasm. It catalyses the reaction Hydrolysis of proteins to small peptides in the presence of ATP and magnesium. alpha-casein is the usual test substrate. In the absence of ATP, only oligopeptides shorter than five residues are hydrolyzed (such as succinyl-Leu-Tyr-|-NHMec, and Leu-Tyr-Leu-|-Tyr-Trp, in which cleavage of the -Tyr-|-Leu- and -Tyr-|-Trp bonds also occurs).. Functionally, cleaves peptides in various proteins in a process that requires ATP hydrolysis. Has a chymotrypsin-like activity. Plays a major role in the degradation of misfolded proteins. The chain is ATP-dependent Clp protease proteolytic subunit from Bacillus velezensis (strain DSM 23117 / BGSC 10A6 / LMG 26770 / FZB42) (Bacillus amyloliquefaciens subsp. plantarum).